Here is a 470-residue protein sequence, read N- to C-terminus: Bifunctional protein ArgHA (470 aa).

Residues 1 to 470 (MALWGGRFSQ…TSGISIRAAR (470 aa)) form an argininosuccinate lyase region.

The protein in the N-terminal section; belongs to the lyase 1 family. Argininosuccinate lyase subfamily. It in the C-terminal section; belongs to the acetyltransferase family. ArgA subfamily.

Its subcellular location is the cytoplasm. The enzyme catalyses 2-(N(omega)-L-arginino)succinate = fumarate + L-arginine. It carries out the reaction L-glutamate + acetyl-CoA = N-acetyl-L-glutamate + CoA + H(+). Its pathway is amino-acid biosynthesis; L-arginine biosynthesis; N(2)-acetyl-L-ornithine from L-glutamate: step 1/4. The protein operates within amino-acid biosynthesis; L-arginine biosynthesis; L-arginine from L-ornithine and carbamoyl phosphate: step 3/3. This is Bifunctional protein ArgHA (argHA) from Moritella profunda.